A 29-amino-acid chain; its full sequence is Cytolysin Oshem 1 (29 aa).

It is found in the secreted. It localises to the nematocyst. The protein localises to the target cell membrane. Functionally, cytolysin that shows moderate hemolysis and moderate myonecrosis. This chain is Cytolysin Oshem 1, found in Olindias sambaquiensis (Hydromedusa).